Here is a 317-residue protein sequence, read N- to C-terminus: Taste receptor type 2 member 7 (317 aa).

Over 1–9 (MTDKVQTTL) the chain is Extracellular. A helical transmembrane segment spans residues 10–30 (LFLAIGEFSVGILGNAFIGLV). Residues 31-55 (NCMDWVKKRKIASIDLILTSLAISR) are Cytoplasmic-facing. The helical transmembrane segment at 56–76 (ICLLCVILLDCFMLVLYPDVY) threads the bilayer. Over 77-94 (ATGKQMRIIDFFWTLTNH) the chain is Extracellular. Residues 95–115 (LSIWFATCLSIYYFFKIANFF) traverse the membrane as a helical segment. Residues 116–128 (HPLFLWMKWRIDR) are Cytoplasmic-facing. A helical transmembrane segment spans residues 129 to 149 (VISWILLGCMVLSVFINLPAT). Topologically, residues 150–187 (ENLNADFRRCVKAKRKTNLTWSCRVTKAQHASTKLFLN) are extracellular. Asparagine 167 is a glycosylation site (N-linked (GlcNAc...) asparagine). The chain crosses the membrane as a helical span at residues 188-208 (LVTLLPFSVCLVSFFLLILSL). The Cytoplasmic portion of the chain corresponds to 209–235 (WRHIRRMQLSATGCRDPSTEAHVRALK). The chain crosses the membrane as a helical span at residues 236 to 256 (AVISFLFLFIAYYLSFLIATS). The Extracellular portion of the chain corresponds to 257 to 266 (SYFIPETELA). Residues 267–287 (VIFGEFIALIYPSSHSFILIL) traverse the membrane as a helical segment. The Cytoplasmic portion of the chain corresponds to 288–317 (GNNKLRRASLKVLWTVMSILKGRKFQQKQI).

The protein belongs to the G-protein coupled receptor T2R family.

It is found in the membrane. In terms of biological role, gustducin-coupled receptor implicated in the perception of bitter compounds in the oral cavity and the gastrointestinal tract. Signals through PLCB2 and the calcium-regulated cation channel TRPM5. This is Taste receptor type 2 member 7 (TAS2R7) from Papio hamadryas (Hamadryas baboon).